The primary structure comprises 130 residues: Small ribosomal subunit protein bS6 (130 aa).

The segment at 96 to 130 (VTEASPMAKARDERDSRRSPSDDRIEEESAEENAE) is disordered. Residues 104-118 (KARDERDSRRSPSDD) are compositionally biased toward basic and acidic residues. Residues 119–130 (RIEEESAEENAE) show a composition bias toward acidic residues.

The protein belongs to the bacterial ribosomal protein bS6 family.

Its function is as follows. Binds together with bS18 to 16S ribosomal RNA. The polypeptide is Small ribosomal subunit protein bS6 (Shewanella denitrificans (strain OS217 / ATCC BAA-1090 / DSM 15013)).